The primary structure comprises 372 residues: Aminomethyltransferase (372 aa).

Belongs to the GcvT family. As to quaternary structure, the glycine cleavage system is composed of four proteins: P, T, L and H.

The catalysed reaction is N(6)-[(R)-S(8)-aminomethyldihydrolipoyl]-L-lysyl-[protein] + (6S)-5,6,7,8-tetrahydrofolate = N(6)-[(R)-dihydrolipoyl]-L-lysyl-[protein] + (6R)-5,10-methylene-5,6,7,8-tetrahydrofolate + NH4(+). Functionally, the glycine cleavage system catalyzes the degradation of glycine. In Burkholderia multivorans (strain ATCC 17616 / 249), this protein is Aminomethyltransferase.